The sequence spans 701 residues: Protein UL29/UL28 (701 aa).

The disordered stretch occupies residues 1-33 (MSGRRKGCSAATASSSSSSPPSRLPPLPGHARR).

This sequence belongs to the herpesviridae US22 family. Interacts with UL38 and host HDAC1; these interactions are necessary for the HDAC1 interaction with UL38. Interacts with host MTA2.

Its subcellular location is the virion. It localises to the host nucleus. The protein resides in the host cytoplasm. In terms of biological role, contributes to activation of immediate-early gene expression. This is Protein UL29/UL28 (UL29) from Homo sapiens (Human).